The primary structure comprises 116 residues: Large ribosomal subunit protein bL17 (116 aa).

It belongs to the bacterial ribosomal protein bL17 family. Part of the 50S ribosomal subunit. Contacts protein L32.

The polypeptide is Large ribosomal subunit protein bL17 (Dictyoglomus thermophilum (strain ATCC 35947 / DSM 3960 / H-6-12)).